The following is a 161-amino-acid chain: Endoribonuclease YbeY (161 aa).

Residues H121, H125, and H131 each coordinate Zn(2+).

Belongs to the endoribonuclease YbeY family. Requires Zn(2+) as cofactor.

The protein localises to the cytoplasm. Functionally, single strand-specific metallo-endoribonuclease involved in late-stage 70S ribosome quality control and in maturation of the 3' terminus of the 16S rRNA. In Xanthomonas axonopodis pv. citri (strain 306), this protein is Endoribonuclease YbeY.